A 301-amino-acid polypeptide reads, in one-letter code: Probable alpha-L-glutamate ligase (301 aa).

One can recognise an ATP-grasp domain in the interval 104 to 287 (LQLLSRKGIG…VAGLIYEFIE (184 aa)). ATP-binding positions include Lys-141, 178-179 (EF), Asp-187, and 211-213 (RSN). Mg(2+) is bound by residues Asp-248, Glu-260, and Asn-262. Mn(2+)-binding residues include Asp-248, Glu-260, and Asn-262.

It belongs to the RimK family. The cofactor is Mg(2+). Mn(2+) serves as cofactor.

The chain is Probable alpha-L-glutamate ligase from Shewanella loihica (strain ATCC BAA-1088 / PV-4).